We begin with the raw amino-acid sequence, 591 residues long: Heterogeneous nuclear ribonucleoprotein L-like (591 aa).

The segment at 1-120 (MSSSSSSSPK…STEGGGSHHK (120 aa)) is disordered. The span at 20–31 (FESQAKRLKTEE) shows a compositional bias: basic and acidic residues. K28 is covalently cross-linked (Glycyl lysine isopeptide (Lys-Gly) (interchain with G-Cter in SUMO2)). The residue at position 37 (S37) is a Phosphoserine. At T48 the chain carries Phosphothreonine. A compositionally biased stretch (gly residues) spans 57-73 (SGGGDGGDGDGGSGGGG). Positions 74–91 (DGEEGEGGEEGDEGDGDE) are enriched in acidic residues. The span at 92–105 (GGSGGDEGGSGGGP) shows a compositional bias: gly residues. Phosphoserine occurs at positions 107, 117, and 124. RRM domains are found at residues 125–199 (PVVH…YSTS), 215–293 (NKVL…YARP), and 384–458 (SVVM…VSKQ). K540 is covalently cross-linked (Glycyl lysine isopeptide (Lys-Gly) (interchain with G-Cter in SUMO2)).

Interacts with HNRNPL.

Functionally, RNA-binding protein that functions as a regulator of alternative splicing for multiple target mRNAs, including PTPRC/CD45 and STAT5A. Required for alternative splicing of PTPRC. The polypeptide is Heterogeneous nuclear ribonucleoprotein L-like (Hnrnpll) (Mus musculus (Mouse)).